Reading from the N-terminus, the 158-residue chain is uncharacterized protein (158 aa).

This is an uncharacterized protein from Archaeoglobus fulgidus (strain ATCC 49558 / DSM 4304 / JCM 9628 / NBRC 100126 / VC-16).